The following is a 241-amino-acid chain: 1-(5-phosphoribosyl)-5-[(5-phosphoribosylamino)methylideneamino] imidazole-4-carboxamide isomerase (241 aa).

The active-site Proton acceptor is D8. The Proton donor role is filled by D131.

The protein belongs to the HisA/HisF family.

It localises to the cytoplasm. It catalyses the reaction 1-(5-phospho-beta-D-ribosyl)-5-[(5-phospho-beta-D-ribosylamino)methylideneamino]imidazole-4-carboxamide = 5-[(5-phospho-1-deoxy-D-ribulos-1-ylimino)methylamino]-1-(5-phospho-beta-D-ribosyl)imidazole-4-carboxamide. Its pathway is amino-acid biosynthesis; L-histidine biosynthesis; L-histidine from 5-phospho-alpha-D-ribose 1-diphosphate: step 4/9. In Sorangium cellulosum (strain So ce56) (Polyangium cellulosum (strain So ce56)), this protein is 1-(5-phosphoribosyl)-5-[(5-phosphoribosylamino)methylideneamino] imidazole-4-carboxamide isomerase.